The chain runs to 463 residues: Oxidoreductase OXR1 (463 aa).

6-hydroxy-FAD-binding positions include 59 to 63 (GGSYS), Val154, and Asp366.

Belongs to the FAD-dependent oxidoreductase family. It depends on 6-hydroxy-FAD as a cofactor.

It participates in siderophore biosynthesis. Functionally, oxidoreductase; part of the gene cluster that mediates the biosynthesis of hydroxamate-containing siderophores that play a critical role in virulence via intracellular iron acquisition during macrophage infection. In Ajellomyces capsulatus (Darling's disease fungus), this protein is Oxidoreductase OXR1.